Reading from the N-terminus, the 663-residue chain is MHLPRRRRLQRNRIFFFLAVVSLLSVYQLQFSPSAIPALLTAHQHEDPVKVTSREPFRNKTSKTGNVTAAPKIRHCVYIDPEPTVPITASEDTTQRENVNESYPDEKPVYESKGEYPQDLFSVEERRQGWVVLHIFGMMYVFVALAIVCDEYFVPALGVITEKLQISEDVAGATFMAAGGSAPELFTSLIGVFISHSNVGIGTIVGSAVFNILFVIGTCALFSREILHLTWWPLFRDISFYIVDLLMLILFFLDSVIDWWESLLLLTAYATYVFTMKHNVSLEQWVKEELSKKLNAVQAASAEHMRKKSSVAVAEDGTKPADGKKLQPTTALQRGTSSASLHNSQMRSTIFQLMIHTLDPLAGAKFKDRVDILSNIAKVKADSLTGQGTKPEAEEEKQASQNTVQVTPASDSEPSKDKQKEDTPQDGQPPSDSDNSEDSSSDSEDDSDDDSTDDEENDEPLSLEWPETRKKQAIYLFLFPIVFPLWSTIPDVRNPDSKKFFVITFFGSIIWIAAFSYLMVWWAHQVGETIGISEEIMGLTILAAGTSIPDLITSVIVARKGLGDMAVSSSVGSNIFDITVGLPVPWFLYSVFNGFSPVAVSSNGLFCAIVLLFLMLLFVIISIALCKWKMNKILGVTMFALYFVFLIISVMLEDRIISCPVSV.

Over 32 to 128 (SPSAIPALLT…DLFSVEERRQ (97 aa)) the chain is Extracellular. 3 N-linked (GlcNAc...) asparagine glycosylation sites follow: asparagine 59, asparagine 66, and asparagine 100. Residues 129 to 149 (GWVVLHIFGMMYVFVALAIVC) form a helical membrane-spanning segment. The Cytoplasmic portion of the chain corresponds to 150–173 (DEYFVPALGVITEKLQISEDVAGA). One copy of the Alpha-1 repeat lies at 170–210 (VAGATFMAAGGSAPELFTSLIGVFISHSNVGIGTIVGSAVF). A helical membrane pass occupies residues 174-194 (TFMAAGGSAPELFTSLIGVFI). Topologically, residues 195–200 (SHSNVG) are extracellular. The chain crosses the membrane as a helical span at residues 201-221 (IGTIVGSAVFNILFVIGTCAL). Residues 222–228 (FSREILH) are Cytoplasmic-facing. The chain crosses the membrane as a helical span at residues 229–253 (LTWWPLFRDISFYIVDLLMLILFFL). The Extracellular segment spans residues 254 to 259 (DSVIDW). The chain crosses the membrane as a helical span at residues 260–276 (WESLLLLTAYATYVFTM). Residues 277-471 (KHNVSLEQWV…SLEWPETRKK (195 aa)) lie on the Cytoplasmic side of the membrane. Disordered regions lie at residues 308-343 (KSSV…SLHN) and 384-465 (LTGQ…SLEW). A compositionally biased stretch (basic and acidic residues) spans 316–325 (DGTKPADGKK). Composition is skewed to polar residues over residues 327–343 (QPTT…SLHN) and 399–412 (ASQN…ASDS). At serine 337 the chain carries Phosphoserine. Residues 413–423 (EPSKDKQKEDT) are compositionally biased toward basic and acidic residues. The span at 434-461 (DNSEDSSSDSEDDSDDDSTDDEENDEPL) shows a compositional bias: acidic residues. The helical transmembrane segment at 472–492 (QAIYLFLFPIVFPLWSTIPDV) threads the bilayer. Residues 493-499 (RNPDSKK) lie on the Extracellular side of the membrane. A helical membrane pass occupies residues 500–520 (FFVITFFGSIIWIAAFSYLMV). Over 521 to 535 (WWAHQVGETIGISEE) the chain is Cytoplasmic. The chain crosses the membrane as a helical span at residues 536 to 556 (IMGLTILAAGTSIPDLITSVI). One copy of the Alpha-2 repeat lies at 543–574 (AAGTSIPDLITSVIVARKGLGDMAVSSSVGSN). Over 557-574 (VARKGLGDMAVSSSVGSN) the chain is Extracellular. A helical transmembrane segment spans residues 575-595 (IFDITVGLPVPWFLYSVFNGF). Residues 596 to 604 (SPVAVSSNG) are Cytoplasmic-facing. A helical transmembrane segment spans residues 605–625 (LFCAIVLLFLMLLFVIISIAL). At 626–632 (CKWKMNK) the chain is on the extracellular side. Residues 633–653 (ILGVTMFALYFVFLIISVMLE) form a helical membrane-spanning segment. Residues 654-663 (DRIISCPVSV) are Cytoplasmic-facing.

This sequence belongs to the Ca(2+):cation antiporter (CaCA) (TC 2.A.19) family. SLC24A subfamily. Post-translationally, the uncleaved signal sequence is required for efficient membrane targeting and proper membrane integration and topology. As to expression, retinal rods. Localizes to the inner segment of rod photoreceptors.

It is found in the cell membrane. The catalysed reaction is Ca(2+)(out) + K(+)(out) + 4 Na(+)(in) = Ca(2+)(in) + K(+)(in) + 4 Na(+)(out). Calcium, potassium:sodium antiporter that transports 1 Ca(2+) and 1 K(+) in exchange for 4 Na(+). Critical component of the visual transduction cascade, controlling the calcium concentration of outer segments during light and darkness. Light causes a rapid lowering of cytosolic free calcium in the outer segment of both retinal rod and cone photoreceptors and the light-induced lowering of calcium is caused by extrusion via this protein which plays a key role in the process of light adaptation. In Gallus gallus (Chicken), this protein is Sodium/potassium/calcium exchanger 1 (SLC24A1).